The following is a 127-amino-acid chain: Ribosome-binding factor A (127 aa).

It belongs to the RbfA family. Monomer. Binds 30S ribosomal subunits, but not 50S ribosomal subunits or 70S ribosomes.

It is found in the cytoplasm. Its function is as follows. One of several proteins that assist in the late maturation steps of the functional core of the 30S ribosomal subunit. Associates with free 30S ribosomal subunits (but not with 30S subunits that are part of 70S ribosomes or polysomes). Required for efficient processing of 16S rRNA. May interact with the 5'-terminal helix region of 16S rRNA. This is Ribosome-binding factor A from Nitrosococcus oceani (strain ATCC 19707 / BCRC 17464 / JCM 30415 / NCIMB 11848 / C-107).